A 355-amino-acid polypeptide reads, in one-letter code: Membrane cofactor protein (355 aa).

The N-terminal stretch at 1–42 is a signal peptide; that stretch reads MTAAPLTPDPTHPRRRRKSYTFFSLGIYAEALLFLLSSLSDA. Sushi domains lie at 43-104, 105-168, 169-234, and 235-294; these read CEPP…GCIK, VQCT…SCKK, VYCL…ECKV, and VKCP…QCLK. The Extracellular segment spans residues 43–326; that stretch reads CEPPPPFEAM…GIFGQEFDAW (284 aa). Intrachain disulfides connect Cys107–Cys149, Cys135–Cys166, Cys171–Cys219, Cys200–Cys232, Cys237–Cys279, and Cys265–Cys292. A glycan (N-linked (GlcNAc...) asparagine) is linked at Asn179. Thr301 carries an O-linked (GalNAc...) threonine glycan. The helical transmembrane segment at 327–347 threads the bilayer; sequence IIALIVVTSVVGVIVICLIIL. Residues 348–355 lie on the Cytoplasmic side of the membrane; that stretch reads RCSEYRKK.

In terms of assembly, interacts with C3b. Interacts with C4b. Interacts with moesin/MSN. Post-translationally, O-glycosylated. N-glycosylated. Specifically expressed in testis. Within testis, present only in elongated spermatids and spermatozoa (at protein level).

It localises to the cytoplasmic vesicle. It is found in the secretory vesicle. The protein localises to the acrosome inner membrane. May be involved in the fusion of the spermatozoa with the oocyte during fertilization. This Rattus norvegicus (Rat) protein is Membrane cofactor protein (Cd46).